Here is a 197-residue protein sequence, read N- to C-terminus: UPF0301 protein A2cp1_4106 (197 aa).

This sequence belongs to the UPF0301 (AlgH) family.

The polypeptide is UPF0301 protein A2cp1_4106 (Anaeromyxobacter dehalogenans (strain 2CP-1 / ATCC BAA-258)).